Consider the following 247-residue polypeptide: Ribosomal RNA small subunit methyltransferase G (247 aa).

The S-adenosyl-L-methionine site is built by Gly-86, Leu-91, and Arg-154.

It belongs to the methyltransferase superfamily. RNA methyltransferase RsmG family.

The protein localises to the cytoplasm. Specifically methylates the N7 position of a guanine in 16S rRNA. The polypeptide is Ribosomal RNA small subunit methyltransferase G (Leptospira biflexa serovar Patoc (strain Patoc 1 / Ames)).